The sequence spans 388 residues: DNA ADP-ribosyl transferase-DNA ADP-ribosyl glycohydrolase fusion protein (388 aa).

A DarT domain is found at Arg6–Phe197. NAD(+) contacts are provided by residues Tyr10–Thr12 and Arg50. Residues Gln34–Ser52 are NAD(+)-binding element. Catalysis depends on Arg50, which acts as the Proton acceptor. Residues Thr107 to Glu152 form an ADP-ribosylating turn-turn loop region. Glu152 is a catalytic residue. The region spanning Phe196–Pro376 is the Macro domain. Residues Asp215–Met216, Ser227–Asn229, Thr301, Gly339–Gly343, and Leu371–Glu372 each bind ADP-D-ribose.

The protein in the N-terminal section; belongs to the DarT ADP-ribosyltransferase family. It in the C-terminal section; belongs to the DarG ADP-ribosyl glycohydrolase family.

It carries out the reaction an N-(ADP-alpha-D-ribosyl)-thymidine in DNA + H2O = a thymidine in DNA + ADP-D-ribose. It catalyses the reaction a thymidine in DNA + NAD(+) = an N-(ADP-alpha-D-ribosyl)-thymidine in DNA + nicotinamide + H(+). A fusion protein of the toxic and antitoxin components of a hybrid type II/IV toxin-antitoxin (TA) system. The N-terminal domain ADP-ribosylates ssDNA on a thymidine residue, while the C-terminal domain removes the modification, neutralizing the toxic effect. This Thermosipho africanus (strain H17ap60334) protein is DNA ADP-ribosyl transferase-DNA ADP-ribosyl glycohydrolase fusion protein.